The sequence spans 153 residues: Cytochrome c-type biogenesis protein CcmE (153 aa).

The Cytoplasmic portion of the chain corresponds to 1–6; sequence MNARRR. Residues 7 to 27 form a helical; Signal-anchor for type II membrane protein membrane-spanning segment; it reads LWSLLMLILAVGTAATLTIMA. Over 28–153 the chain is Periplasmic; that stretch reads LRRNLTYLYM…LDTPIAQTTP (126 aa). His-121 and Tyr-125 together coordinate heme. The segment covering 130–141 has biased composition (polar residues); it reads LTNKMQPTPTQH. A disordered region spans residues 130 to 153; the sequence is LTNKMQPTPTQHTHLDTPIAQTTP.

This sequence belongs to the CcmE/CycJ family.

It is found in the cell inner membrane. Functionally, heme chaperone required for the biogenesis of c-type cytochromes. Transiently binds heme delivered by CcmC and transfers the heme to apo-cytochromes in a process facilitated by CcmF and CcmH. The chain is Cytochrome c-type biogenesis protein CcmE from Xylella fastidiosa (strain 9a5c).